Reading from the N-terminus, the 142-residue chain is Ribonuclease VapC44 (142 aa).

Residues 4–126 form the PINc domain; that stretch reads LLDVNVLLAL…GRFVTFDQSI (123 aa). Residues Asp6 and Asp105 each contribute to the Mg(2+) site.

Belongs to the PINc/VapC protein family. Requires Mg(2+) as cofactor.

Its function is as follows. Toxic component of a type II toxin-antitoxin (TA) system. An RNase. Its cognate antitoxin is VapB44. The protein is Ribonuclease VapC44 of Mycobacterium tuberculosis (strain CDC 1551 / Oshkosh).